Consider the following 555-residue polypeptide: Small ribosomal subunit protein uS3m (555 aa).

A disordered region spans residues Met1 to Ser20.

The protein belongs to the universal ribosomal protein uS3 family.

The protein resides in the mitochondrion. This Brassica napus (Rape) protein is Small ribosomal subunit protein uS3m (RPS3).